The primary structure comprises 81 residues: Photosystem I iron-sulfur center (81 aa).

2 4Fe-4S ferredoxin-type domains span residues 2–31 and 39–68; these read SHSV…MIPW and IASA…VRVY. 8 residues coordinate [4Fe-4S] cluster: Cys11, Cys14, Cys17, Cys21, Cys48, Cys51, Cys54, and Cys58.

As to quaternary structure, the eukaryotic PSI reaction center is composed of at least 11 subunits. It depends on [4Fe-4S] cluster as a cofactor.

It is found in the plastid. The protein localises to the chloroplast thylakoid membrane. It carries out the reaction reduced [plastocyanin] + hnu + oxidized [2Fe-2S]-[ferredoxin] = oxidized [plastocyanin] + reduced [2Fe-2S]-[ferredoxin]. In terms of biological role, apoprotein for the two 4Fe-4S centers FA and FB of photosystem I (PSI); essential for photochemical activity. FB is the terminal electron acceptor of PSI, donating electrons to ferredoxin. The C-terminus interacts with PsaA/B/D and helps assemble the protein into the PSI complex. Required for binding of PsaD and PsaE to PSI. PSI is a plastocyanin-ferredoxin oxidoreductase, converting photonic excitation into a charge separation, which transfers an electron from the donor P700 chlorophyll pair to the spectroscopically characterized acceptors A0, A1, FX, FA and FB in turn. The sequence is that of Photosystem I iron-sulfur center from Spinacia oleracea (Spinach).